The following is a 635-amino-acid chain: Threonine--tRNA ligase (635 aa).

The 58-residue stretch at 1 to 58 folds into the TGS domain; the sequence is MIHVTCNQEAFELPEGASAMDLANKMKQSHCFVGALINDQEKDLSTTLQDGDTVLFLT. The catalytic stretch occupies residues 237-528; sequence DHRVLGTKLD…LIEHFKGRFP (292 aa). Residues cysteine 328, histidine 379, and histidine 505 each coordinate Zn(2+).

The protein belongs to the class-II aminoacyl-tRNA synthetase family. As to quaternary structure, homodimer. Zn(2+) is required as a cofactor.

The protein resides in the cytoplasm. It catalyses the reaction tRNA(Thr) + L-threonine + ATP = L-threonyl-tRNA(Thr) + AMP + diphosphate + H(+). In terms of biological role, catalyzes the attachment of threonine to tRNA(Thr) in a two-step reaction: L-threonine is first activated by ATP to form Thr-AMP and then transferred to the acceptor end of tRNA(Thr). Also edits incorrectly charged L-seryl-tRNA(Thr). The protein is Threonine--tRNA ligase of Chlamydia trachomatis serovar L2b (strain UCH-1/proctitis).